A 536-amino-acid polypeptide reads, in one-letter code: CTP synthase (536 aa).

The amidoligase domain stretch occupies residues 1 to 268 (MKSKFIFITG…GKVLCKLFNI (268 aa)). Serine 14 is a binding site for CTP. Serine 14 provides a ligand contact to UTP. 15-20 (SLGKGL) provides a ligand contact to ATP. Residue tyrosine 55 coordinates L-glutamine. Aspartate 72 is an ATP binding site. The Mg(2+) site is built by aspartate 72 and glutamate 142. CTP-binding positions include 149-151 (DIE), 189-194 (KTKPMQ), and lysine 225. UTP-binding positions include 189 to 194 (KTKPMQ) and lysine 225. Positions 293 to 535 (TIALVGKYVE…IKAAVDNKIN (243 aa)) constitute a Glutamine amidotransferase type-1 domain. Glycine 356 provides a ligand contact to L-glutamine. The active-site Nucleophile; for glutamine hydrolysis is the cysteine 383. Residues 384-387 (LGMQ), glutamate 407, and arginine 463 contribute to the L-glutamine site. Residues histidine 508 and glutamate 510 contribute to the active site.

It belongs to the CTP synthase family. As to quaternary structure, homotetramer.

It carries out the reaction UTP + L-glutamine + ATP + H2O = CTP + L-glutamate + ADP + phosphate + 2 H(+). The catalysed reaction is L-glutamine + H2O = L-glutamate + NH4(+). The enzyme catalyses UTP + NH4(+) + ATP = CTP + ADP + phosphate + 2 H(+). Its pathway is pyrimidine metabolism; CTP biosynthesis via de novo pathway; CTP from UDP: step 2/2. Its activity is regulated as follows. Allosterically activated by GTP, when glutamine is the substrate; GTP has no effect on the reaction when ammonia is the substrate. The allosteric effector GTP functions by stabilizing the protein conformation that binds the tetrahedral intermediate(s) formed during glutamine hydrolysis. Inhibited by the product CTP, via allosteric rather than competitive inhibition. In terms of biological role, catalyzes the ATP-dependent amination of UTP to CTP with either L-glutamine or ammonia as the source of nitrogen. Regulates intracellular CTP levels through interactions with the four ribonucleotide triphosphates. This chain is CTP synthase, found in Treponema denticola (strain ATCC 35405 / DSM 14222 / CIP 103919 / JCM 8153 / KCTC 15104).